The primary structure comprises 404 residues: Probable tRNA sulfurtransferase (404 aa).

The THUMP domain maps to 61-166; that stretch reads EAISERLKDV…SGYSYIMCGE (106 aa). ATP is bound by residues 184–185, 209–210, arginine 266, glycine 288, and glutamine 297; these read LL and HF.

The protein belongs to the ThiI family.

It is found in the cytoplasm. The catalysed reaction is [ThiI sulfur-carrier protein]-S-sulfanyl-L-cysteine + a uridine in tRNA + 2 reduced [2Fe-2S]-[ferredoxin] + ATP + H(+) = [ThiI sulfur-carrier protein]-L-cysteine + a 4-thiouridine in tRNA + 2 oxidized [2Fe-2S]-[ferredoxin] + AMP + diphosphate. It catalyses the reaction [ThiS sulfur-carrier protein]-C-terminal Gly-Gly-AMP + S-sulfanyl-L-cysteinyl-[cysteine desulfurase] + AH2 = [ThiS sulfur-carrier protein]-C-terminal-Gly-aminoethanethioate + L-cysteinyl-[cysteine desulfurase] + A + AMP + 2 H(+). It participates in cofactor biosynthesis; thiamine diphosphate biosynthesis. Functionally, catalyzes the ATP-dependent transfer of a sulfur to tRNA to produce 4-thiouridine in position 8 of tRNAs, which functions as a near-UV photosensor. Also catalyzes the transfer of sulfur to the sulfur carrier protein ThiS, forming ThiS-thiocarboxylate. This is a step in the synthesis of thiazole, in the thiamine biosynthesis pathway. The sulfur is donated as persulfide by IscS. The chain is Probable tRNA sulfurtransferase from Bacillus cereus (strain G9842).